A 199-amino-acid chain; its full sequence is Outer-membrane lipoprotein LolB (199 aa).

Positions Met1–Gly28 are cleaved as a signal peptide. A lipid anchor (N-palmitoyl cysteine) is attached at Cys29. A lipid anchor (S-diacylglycerol cysteine) is attached at Cys29.

This sequence belongs to the LolB family. In terms of assembly, monomer.

It is found in the cell outer membrane. Functionally, plays a critical role in the incorporation of lipoproteins in the outer membrane after they are released by the LolA protein. The chain is Outer-membrane lipoprotein LolB from Bordetella pertussis (strain Tohama I / ATCC BAA-589 / NCTC 13251).